The following is a 981-amino-acid chain: Helicase-like transcription factor CHR28 (981 aa).

2 disordered regions span residues 1 to 66 and 112 to 194; these read MDSA…LDSR and KRTH…RNSE. The span at 46 to 65 shows a compositional bias: polar residues; the sequence is SGSSSGANGHTKTGLTNLDS. The span at 119–128 shows a compositional bias: pro residues; the sequence is FSRPPFPPRP. The segment covering 166-176 has biased composition (polar residues); that stretch reads HGTSASPSHFN. Basic and acidic residues predominate over residues 181-194; it reads PMHRNGIGEERNSE. In terms of domain architecture, Helicase ATP-binding spans 241-526; that stretch reads ETNSLHCMGG…YSYFRFLKYD (286 aa). 254–261 serves as a coordination point for ATP; sequence DDQGLGKT. Disordered stretches follow at residues 293 to 337 and 439 to 462; these read DADD…RKFN and VVGTTKKSKKKKGNNNAGDSSDPD. Basic residues predominate over residues 439 to 451; the sequence is VVGTTKKSKKKKG. The RING-type; degenerate zinc finger occupies 679 to 718; that stretch reads CCVCHDPPEDPVVTLCGHIFCYQCVSDYITGDEDTCPAPR. Over residues 779-798 the composition is skewed to polar residues; the sequence is NQGTSNSTQNGQMASSSQQP. The segment at 779-808 is disordered; the sequence is NQGTSNSTQNGQMASSSQQPNDDDDDDDDD. Acidic residues predominate over residues 799–808; the sequence is NDDDDDDDDD. A Helicase C-terminal domain is found at 804-976; that stretch reads DDDDDVTIVE…ATRLTVDDLK (173 aa).

Belongs to the SNF2/RAD54 helicase family. RAD16 subfamily. As to quaternary structure, interacts with SUVR2.

The protein localises to the nucleus. Its function is as follows. Probable helicase-like transcription factor involved in transcriptional gene silencing. Associates with SUVR2 and contributes to transcriptional gene silencing at RNA-directed DNA methylation (RdDM) target loci but also at RdDM-independent target loci. May be involved in nucleosome positioning to form ordered nucleosome arrays on chromatin. Associates with SUVR2 and functions redundantly with FRG1. Required for the efficient methylation of a broad range of RdDM target loci. In Arabidopsis thaliana (Mouse-ear cress), this protein is Helicase-like transcription factor CHR28.